Reading from the N-terminus, the 409-residue chain is Dihydrolipoyllysine-residue succinyltransferase component of 2-oxoglutarate dehydrogenase complex (409 aa).

The Lipoyl-binding domain maps to 2–77 (AIEILVPDLP…VSKQLLGKIS (76 aa)). At K43 the chain carries N6-lipoyllysine. The span at 83–107 (DVSSATLKATNEPTPSDRQNAAIEN) shows a compositional bias: polar residues. Positions 83-114 (DVSSATLKATNEPTPSDRQNAAIENSHNHNAD) are disordered. Positions 114-151 (DQSPVIRRLLAEHDLQADQIQGSGVGGRLTREDIEREI) constitute a Peripheral subunit-binding (PSBD) domain. Catalysis depends on residues H380 and D384.

The protein belongs to the 2-oxoacid dehydrogenase family. As to quaternary structure, forms a 24-polypeptide structural core with octahedral symmetry. Part of the 2-oxoglutarate dehydrogenase (OGDH) complex composed of E1 (2-oxoglutarate dehydrogenase), E2 (dihydrolipoamide succinyltransferase) and E3 (dihydrolipoamide dehydrogenase); the complex contains multiple copies of the three enzymatic components (E1, E2 and E3). Requires (R)-lipoate as cofactor.

The catalysed reaction is N(6)-[(R)-dihydrolipoyl]-L-lysyl-[protein] + succinyl-CoA = N(6)-[(R)-S(8)-succinyldihydrolipoyl]-L-lysyl-[protein] + CoA. The protein operates within amino-acid degradation; L-lysine degradation via saccharopine pathway; glutaryl-CoA from L-lysine: step 6/6. In terms of biological role, E2 component of the 2-oxoglutarate dehydrogenase (OGDH) complex which catalyzes the second step in the conversion of 2-oxoglutarate to succinyl-CoA and CO(2). This is Dihydrolipoyllysine-residue succinyltransferase component of 2-oxoglutarate dehydrogenase complex (sucB) from Haemophilus influenzae (strain ATCC 51907 / DSM 11121 / KW20 / Rd).